The following is a 210-amino-acid chain: Cell division protein SepF (210 aa).

The tract at residues 13-78 (GFGEPTGYDY…VTSTAMNPPM (66 aa)) is disordered. A compositionally biased stretch (acidic residues) spans 22 to 31 (YDYDEMEGDD). Basic and acidic residues predominate over residues 47–60 (RSEEPHPRPSEPEM). Positions 64–78 (VNTSAVTSTAMNPPM) are enriched in polar residues.

Belongs to the SepF family. As to quaternary structure, homodimer. Interacts with FtsZ.

It is found in the cytoplasm. Its function is as follows. Cell division protein that is part of the divisome complex and is recruited early to the Z-ring. Probably stimulates Z-ring formation, perhaps through the cross-linking of FtsZ protofilaments. Its function overlaps with FtsA. This chain is Cell division protein SepF, found in Cyanothece sp. (strain PCC 7425 / ATCC 29141).